Consider the following 73-residue polypeptide: Disintegrin molossin (73 aa).

The 73-residue stretch at 1-73 folds into the Disintegrin domain; sequence EAGIECDCGS…ADCPRNRFHA (73 aa). Disulfide bonds link Cys-6–Cys-21, Cys-8–Cys-16, Cys-15–Cys-38, Cys-29–Cys-35, Cys-34–Cys-59, and Cys-47–Cys-66. Positions 51-53 match the Cell attachment site motif; it reads RGD.

It belongs to the venom metalloproteinase (M12B) family. P-II subfamily. P-IIa sub-subfamily. In terms of assembly, monomer (disintegrin). In terms of tissue distribution, expressed by the venom gland.

The protein resides in the secreted. In terms of biological role, inhibits fibrinogen interaction with platelets. Acts by binding to alpha-IIb/beta-3 (ITGA2B/ITGB3) on the platelet surface and inhibits aggregation induced by ADP, thrombin, platelet-activating factor and collagen. The sequence is that of Disintegrin molossin from Crotalus molossus molossus (Northern black-tailed rattlesnake).